The following is a 490-amino-acid chain: MDAVLVLVFILSSLVFLSLWRQSSERRKLPPGPTPLPIIGNFLQIDVKNISGSLTNFSKVYGPVFTLYLGMKPTVVLHGYETVKEALIDHGEEFAGRGDFPMAERINKGLGIVFSNGNRWKEIRRFSLMTLRNLGMGKRNIEDRVQEEAQCLVEELRKTNGSPCDPTFILSCAPCNVICSIIFQNRFDYKDQDFLTFMKKVNENVRILSSPWLQVCNNFPSLIDYCPGSHHKITKNVNYLKKYILEKIEEHQESLDIENPRDFIDYYLIKLKQANHNQQSEFSLENLTTTVSDLFGAGTETTSTTLRYALLLLLKHPHVTAKVQEEIDQVVGRHRKPCMQDRSHMPYTDAMIHEVQRFIDLIPISLPHAVTCDIKFRDYFIPKGTTVITSLSSVLHDNKEFPNPEVFDPGHFLDKNGNFKKSDYFMPFSAGKRICAGEGLARMELFLFLTTILQNFKLKSMIHPKDIDTTPVVNGFASLPPSYQLCFIPV.

Residue C435 coordinates heme.

Belongs to the cytochrome P450 family. The cofactor is heme.

The protein resides in the endoplasmic reticulum membrane. It localises to the microsome membrane. The enzyme catalyses an organic molecule + reduced [NADPH--hemoprotein reductase] + O2 = an alcohol + oxidized [NADPH--hemoprotein reductase] + H2O + H(+). In terms of biological role, catalyzes the hydroxylation of tolbutamide and the N-demethylation of aminopyrine and benzphetamine. Also has testosterone hydroxylase (16 beta) activity. The polypeptide is Cytochrome P450 2C25 (CYP2C25) (Mesocricetus auratus (Golden hamster)).